We begin with the raw amino-acid sequence, 345 residues long: uncharacterized protein (345 aa).

Residues 1 to 98 form a disordered region; that stretch reads MNDEMKGKSG…ISGKSFIDPE (98 aa). Composition is skewed to basic and acidic residues over residues 18–27, 42–68, and 76–86; these read RSDDDSDKRT, SRAD…EDSP, and PGDETPEKADH.

The protein belongs to the class IV-like SAM-binding methyltransferase superfamily. RNA methyltransferase TrmH family.

This is an uncharacterized protein from Escherichia coli O157:H7.